The chain runs to 175 residues: Large ribosomal subunit protein uL10 (175 aa).

It belongs to the universal ribosomal protein uL10 family. In terms of assembly, part of the ribosomal stalk of the 50S ribosomal subunit. The N-terminus interacts with L11 and the large rRNA to form the base of the stalk. The C-terminus forms an elongated spine to which L12 dimers bind in a sequential fashion forming a multimeric L10(L12)X complex.

Its function is as follows. Forms part of the ribosomal stalk, playing a central role in the interaction of the ribosome with GTP-bound translation factors. The polypeptide is Large ribosomal subunit protein uL10 (Alkalilimnicola ehrlichii (strain ATCC BAA-1101 / DSM 17681 / MLHE-1)).